The chain runs to 124 residues: MAYLLVFVGGGLGAMFRHFINTLSGRLLGTAFPYHTFFINVTGSIVMGLIAGYLAFKGGSSQHFRLFLMTGILGGYTTFSAFSLDAALLYERGAVGLAVVYVLGSVVLAIAGLFGGMALIRAMT.

The next 4 helical transmembrane spans lie at 1–21, 36–56, 66–86, and 94–114; these read MAYL…HFIN, TFFI…YLAF, LFLM…SLDA, and AVGL…AGLF. Na(+) contacts are provided by G74 and T77.

It belongs to the fluoride channel Fluc/FEX (TC 1.A.43) family.

It localises to the cell inner membrane. It carries out the reaction fluoride(in) = fluoride(out). Na(+) is not transported, but it plays an essential structural role and its presence is essential for fluoride channel function. In terms of biological role, fluoride-specific ion channel. Important for reducing fluoride concentration in the cell, thus reducing its toxicity. The sequence is that of Fluoride-specific ion channel FluC from Rhodopseudomonas palustris (strain ATCC BAA-98 / CGA009).